Here is a 215-residue protein sequence, read N- to C-terminus: 3-demethoxyubiquinol 3-hydroxylase (215 aa).

E64, E94, H97, E146, E178, and H181 together coordinate Fe cation.

The protein belongs to the COQ7 family. Requires Fe cation as cofactor.

The protein localises to the cell membrane. It carries out the reaction a 5-methoxy-2-methyl-3-(all-trans-polyprenyl)benzene-1,4-diol + AH2 + O2 = a 3-demethylubiquinol + A + H2O. It functions in the pathway cofactor biosynthesis; ubiquinone biosynthesis. Its function is as follows. Catalyzes the hydroxylation of 2-nonaprenyl-3-methyl-6-methoxy-1,4-benzoquinol during ubiquinone biosynthesis. The sequence is that of 3-demethoxyubiquinol 3-hydroxylase from Azotobacter vinelandii (strain DJ / ATCC BAA-1303).